The chain runs to 313 residues: Pyrimidine-specific ribonucleoside hydrolase RihB (313 aa).

The active-site Proton acceptor is the Asp11. Asp11, Asp16, and Val124 together coordinate Ca(2+). Substrate-binding residues include Gln227 and His239. Residue Asp240 coordinates Ca(2+).

It belongs to the IUNH family. RihB subfamily. In terms of assembly, homotetramer. Requires Ca(2+) as cofactor.

It carries out the reaction a pyrimidine ribonucleoside + H2O = a pyrimidine nucleobase + D-ribose. In terms of biological role, hydrolyzes cytidine or uridine to ribose and cytosine or uracil, respectively. Has a clear preference for cytidine over uridine. Strictly specific for ribonucleosides. The protein is Pyrimidine-specific ribonucleoside hydrolase RihB of Escherichia coli O9:H4 (strain HS).